We begin with the raw amino-acid sequence, 32 residues long: Natriuretic peptide Coa_NP2 (32 aa).

Cysteines 8 and 24 form a disulfide.

This sequence belongs to the natriuretic peptide family. Snake NP subfamily. As to expression, expressed by the venom gland.

The protein resides in the secreted. Snake venom natriuretic peptide that exhibits hypotensive and vasorelaxant effects. Produces a dose-dependent hypotension in rats, followed by significant increases in concentrations of markers of nitric oxide (NO) formation measured in the plasma and vasorelaxation in a thoracic aortic ring bath. The peptide may exert its hypotensive action, at least in part, through stimulation of NO production. The vasorelaxant effect is endothelium-dependent and does not appear to be mediated by the natriuretic peptide receptor-A, as its action is not modified by isatin (a potent NPR1 antagonist). May act by activating the natriuretic peptide receptor-B (NPR2). The sequence is that of Natriuretic peptide Coa_NP2 from Crotalus lutosus abyssus (Grand Canyon rattlesnake).